A 430-amino-acid polypeptide reads, in one-letter code: Probable carboxypeptidase AO090003000058 (430 aa).

Residues 1-16 (MKSIYSLVLCTALTAA) form the signal peptide. Asparagine 84 is a glycosylation site (N-linked (GlcNAc...) asparagine). Aspartate 156 is a binding site for Zn(2+). Glutamate 188 (proton acceptor) is an active-site residue. A Zn(2+)-binding site is contributed by glutamate 189. Residue asparagine 285 is glycosylated (N-linked (GlcNAc...) asparagine).

It belongs to the peptidase M20A family. Zn(2+) is required as a cofactor.

The protein localises to the secreted. The sequence is that of Probable carboxypeptidase AO090003000058 from Aspergillus oryzae (strain ATCC 42149 / RIB 40) (Yellow koji mold).